The following is a 563-amino-acid chain: 3-oxosteroid 1-dehydrogenase (563 aa).

An FAD-binding site is contributed by 7-36; that stretch reads DVVVVGSGAAGMVAALVAAHRGLSTVVVEK.

It belongs to the FAD-dependent oxidoreductase 2 family. 3-oxosteroid dehydrogenase subfamily. Requires FAD as cofactor.

The enzyme catalyses a 3-oxosteroid + A = a 3-oxo-Delta(1)-steroid + AH2. It carries out the reaction a 3-oxo-Delta(4)-steroid + A = a 3-oxo-Delta(1,4)-steroid + AH2. The catalysed reaction is 3-oxochol-4-en-22-oyl-CoA + NAD(+) = 3-oxochola-1,4-dien-22-oyl-CoA + NADH + H(+). In terms of biological role, involved in the degradation of cholesterol. Catalyzes the elimination of the C-1 and C-2 hydrogen atoms of the A-ring from the polycyclic ring structure of 3-ketosteroids. Has a clear preference for 3-ketosteroids with a saturated A-ring, displaying highest activity on 5alpha-AD (5alpha-androstane-3,17-dione) and 5alpha-T (5alpha-testosterone, also known as 17beta-hydroxy-5alpha-androstane-3-one). Is also involved in the formation of 3-keto-1,4-diene-steroid from 3-keto-4-ene-steroid. Catalyzes the conversion of 3-oxo-23,24-bisnorchol-4-en-22-oyl-coenzyme A thioester (4-BNC-CoA) to 3-oxo-23,24-bisnorchola-1,4-dien-22-oyl-coenzyme A thioester (1,4-BNC-CoA). The sequence is that of 3-oxosteroid 1-dehydrogenase (kstD) from Mycobacterium tuberculosis (strain ATCC 25618 / H37Rv).